A 491-amino-acid chain; its full sequence is Glutamyl-tRNA(Gln) amidotransferase subunit A (491 aa).

Residues lysine 78 and serine 158 each act as charge relay system in the active site. Catalysis depends on serine 182, which acts as the Acyl-ester intermediate.

Belongs to the amidase family. GatA subfamily. As to quaternary structure, heterotrimer of A, B and C subunits.

The catalysed reaction is L-glutamyl-tRNA(Gln) + L-glutamine + ATP + H2O = L-glutaminyl-tRNA(Gln) + L-glutamate + ADP + phosphate + H(+). In terms of biological role, allows the formation of correctly charged Gln-tRNA(Gln) through the transamidation of misacylated Glu-tRNA(Gln) in organisms which lack glutaminyl-tRNA synthetase. The reaction takes place in the presence of glutamine and ATP through an activated gamma-phospho-Glu-tRNA(Gln). This chain is Glutamyl-tRNA(Gln) amidotransferase subunit A, found in Afipia carboxidovorans (strain ATCC 49405 / DSM 1227 / KCTC 32145 / OM5) (Oligotropha carboxidovorans).